Reading from the N-terminus, the 355-residue chain is UDP-N-acetylglucosamine--N-acetylmuramyl-(pentapeptide) pyrophosphoryl-undecaprenol N-acetylglucosamine transferase (355 aa).

UDP-N-acetyl-alpha-D-glucosamine contacts are provided by residues 15–17 (TGG), asparagine 127, arginine 163, serine 191, isoleucine 244, 263–268 (ALTVSE), and glutamine 288.

This sequence belongs to the glycosyltransferase 28 family. MurG subfamily.

It localises to the cell inner membrane. The enzyme catalyses di-trans,octa-cis-undecaprenyl diphospho-N-acetyl-alpha-D-muramoyl-L-alanyl-D-glutamyl-meso-2,6-diaminopimeloyl-D-alanyl-D-alanine + UDP-N-acetyl-alpha-D-glucosamine = di-trans,octa-cis-undecaprenyl diphospho-[N-acetyl-alpha-D-glucosaminyl-(1-&gt;4)]-N-acetyl-alpha-D-muramoyl-L-alanyl-D-glutamyl-meso-2,6-diaminopimeloyl-D-alanyl-D-alanine + UDP + H(+). It participates in cell wall biogenesis; peptidoglycan biosynthesis. In terms of biological role, cell wall formation. Catalyzes the transfer of a GlcNAc subunit on undecaprenyl-pyrophosphoryl-MurNAc-pentapeptide (lipid intermediate I) to form undecaprenyl-pyrophosphoryl-MurNAc-(pentapeptide)GlcNAc (lipid intermediate II). In Salmonella paratyphi A (strain ATCC 9150 / SARB42), this protein is UDP-N-acetylglucosamine--N-acetylmuramyl-(pentapeptide) pyrophosphoryl-undecaprenol N-acetylglucosamine transferase.